The chain runs to 215 residues: Cytochrome b6 (215 aa).

A helical membrane pass occupies residues 32-52 (IFYCLGGITLTCFLVQVATGF). Position 35 (Cys-35) interacts with heme c. His-86 and His-100 together coordinate heme b. 3 helical membrane passes run 90 to 110 (ASMM…TGGF), 116 to 136 (LTWV…VTGY), and 186 to 206 (LHTF…FPMI). Heme b contacts are provided by His-187 and His-202.

The protein belongs to the cytochrome b family. PetB subfamily. The 4 large subunits of the cytochrome b6-f complex are cytochrome b6, subunit IV (17 kDa polypeptide, PetD), cytochrome f and the Rieske protein, while the 4 small subunits are PetG, PetL, PetM and PetN. The complex functions as a dimer. The cofactor is heme b. Heme c serves as cofactor.

Its subcellular location is the plastid. The protein localises to the chloroplast thylakoid membrane. Functionally, component of the cytochrome b6-f complex, which mediates electron transfer between photosystem II (PSII) and photosystem I (PSI), cyclic electron flow around PSI, and state transitions. The chain is Cytochrome b6 from Cucumis sativus (Cucumber).